Reading from the N-terminus, the 322-residue chain is MADVLTELPGVGPSTADKLIEGGYLDFMKIATATIGELTDIEGISEKAAAKMIMAARDLCDLGFKSGVELLKQRQSVWRLSTGSTELDTVLAGGIESQSVTEFAGMFGSGKTQIMHQTCVNLQIREKIFADLEGVVEEELEAPKAVYIDTEGTFRPERVVQMAEGAGIDGQTVLDNTFVARAYNSDMQMLFAEKIEDLIKGGNNIKLVIIDSLTSTFRNEFTGRGKLAERQQKLGRHMATLNKLADLYNCIVLVTNQVAAKPDAYFGVAEQAIGGHVVGHAATFRFFLRKSKGDKRVAKLYDSPHLPDSEAVFRITEKGIQD.

105–112 serves as a coordination point for ATP; it reads GMFGSGKT.

The protein belongs to the eukaryotic RecA-like protein family.

Its function is as follows. Involved in DNA repair and in homologous recombination. Binds and assemble on single-stranded DNA to form a nucleoprotein filament. Hydrolyzes ATP in a ssDNA-dependent manner and promotes DNA strand exchange between homologous DNA molecules. This is DNA repair and recombination protein RadA from Methanococcus maripaludis (strain DSM 14266 / JCM 13030 / NBRC 101832 / S2 / LL).